A 345-amino-acid polypeptide reads, in one-letter code: Anthranilate phosphoribosyltransferase (345 aa).

5-phospho-alpha-D-ribose 1-diphosphate is bound by residues Gly-86, 89–90, Thr-94, 96–99, 114–122, and Ser-126; these read GD, NIST, and KHGGRGVSS. Gly-86 is an anthranilate binding site. Mg(2+) is bound at residue Ser-98. Residue Arg-172 coordinates anthranilate. Asp-231 and Glu-232 together coordinate Mg(2+).

Belongs to the anthranilate phosphoribosyltransferase family. Homodimer. Mg(2+) serves as cofactor.

The catalysed reaction is N-(5-phospho-beta-D-ribosyl)anthranilate + diphosphate = 5-phospho-alpha-D-ribose 1-diphosphate + anthranilate. It participates in amino-acid biosynthesis; L-tryptophan biosynthesis; L-tryptophan from chorismate: step 2/5. Its function is as follows. Catalyzes the transfer of the phosphoribosyl group of 5-phosphorylribose-1-pyrophosphate (PRPP) to anthranilate to yield N-(5'-phosphoribosyl)-anthranilate (PRA). This is Anthranilate phosphoribosyltransferase from Ralstonia pickettii (strain 12J).